The primary structure comprises 1007 residues: uncharacterized protein (1007 aa).

The signal sequence occupies residues 1–51; sequence MTTPISNSPSSIPTVTVSTTTASSGSLGTSTVSSTTTSTSVAQTATTTSSA. A compositionally biased stretch (low complexity) spans 1-96; sequence MTTPISNSPS…SATANKTSSA (96 aa). 7 disordered regions span residues 1–186, 200–224, 387–533, 543–562, 578–645, 655–674, and 712–757; these read MTTP…GNPI, TYTT…MSLP, NWGS…GPDI, TVYP…ANQN, ETII…GPDI, and DLED…GPDI. A compositionally biased stretch (polar residues) spans 118–163; sequence DGEVSSNYDDVDTPTNSSDSTVDSDYQDVETQYKTISNNGENTYET. The span at 167–176 shows a compositional bias: basic and acidic residues; sequence HGEKNTHVQE. 2 stretches are compositionally biased toward polar residues: residues 177–186 and 200–210; these read SHASGTGNPI and TYTTSPRNENI. The segment covering 423–442 has biased composition (low complexity); that stretch reads VINVNVNVGGTNVNIGDTNV. The segment covering 443–453 has biased composition (polar residues); the sequence is SKGSGTPTSSQ. Low complexity predominate over residues 469–491; the sequence is IDTNNQTNGDINTNDNSNNVDGS. Polar residues predominate over residues 507–523; it reads DTESTNGNDSGKTTSTE. Residues 597 to 618 are compositionally biased toward acidic residues; it reads ADADVEDTSDTDSGIGDDDGVS. Low complexity predominate over residues 619–635; it reads DTESTNGNNSGKTTSTE. The span at 712–730 shows a compositional bias: acidic residues; that stretch reads DLEDVSDADSGFGDDDGIS. Over residues 732-743 the composition is skewed to polar residues; the sequence is TESTNGNDSGKN.

Belongs to the chlamydial CPn_0572/CT_456/TC_0741 family.

This is an uncharacterized protein from Chlamydia muridarum (strain MoPn / Nigg).